A 339-amino-acid polypeptide reads, in one-letter code: tRNA-specific 2-thiouridylase MnmA (339 aa).

Residues 8–15 (AMSGGVDS) and M34 contribute to the ATP site. C94 serves as the catalytic Nucleophile. C94 and C188 form a disulfide bridge. Position 118 (G118) interacts with ATP. The segment at 136–138 (KDQ) is interaction with tRNA. C188 functions as the Cysteine persulfide intermediate in the catalytic mechanism. The tract at residues 290–291 (RY) is interaction with tRNA.

Belongs to the MnmA/TRMU family.

The protein localises to the cytoplasm. It carries out the reaction S-sulfanyl-L-cysteinyl-[protein] + uridine(34) in tRNA + AH2 + ATP = 2-thiouridine(34) in tRNA + L-cysteinyl-[protein] + A + AMP + diphosphate + H(+). Catalyzes the 2-thiolation of uridine at the wobble position (U34) of tRNA, leading to the formation of s(2)U34. In Nitratiruptor sp. (strain SB155-2), this protein is tRNA-specific 2-thiouridylase MnmA.